The following is a 415-amino-acid chain: Serine hydroxymethyltransferase (415 aa).

(6S)-5,6,7,8-tetrahydrofolate contacts are provided by residues leucine 117 and 121 to 123 (GHL). Lysine 226 carries the post-translational modification N6-(pyridoxal phosphate)lysine.

Belongs to the SHMT family. Homodimer. The cofactor is pyridoxal 5'-phosphate.

Its subcellular location is the cytoplasm. The catalysed reaction is (6R)-5,10-methylene-5,6,7,8-tetrahydrofolate + glycine + H2O = (6S)-5,6,7,8-tetrahydrofolate + L-serine. It functions in the pathway one-carbon metabolism; tetrahydrofolate interconversion. It participates in amino-acid biosynthesis; glycine biosynthesis; glycine from L-serine: step 1/1. In terms of biological role, catalyzes the reversible interconversion of serine and glycine with tetrahydrofolate (THF) serving as the one-carbon carrier. This reaction serves as the major source of one-carbon groups required for the biosynthesis of purines, thymidylate, methionine, and other important biomolecules. Also exhibits THF-independent aldolase activity toward beta-hydroxyamino acids, producing glycine and aldehydes, via a retro-aldol mechanism. The sequence is that of Serine hydroxymethyltransferase from Leptospira borgpetersenii serovar Hardjo-bovis (strain JB197).